A 157-amino-acid polypeptide reads, in one-letter code: SsrA-binding protein (157 aa).

Residues 131–157 (KQLHDKRESVKQRDWQRDKARLMRDKG) are disordered. A compositionally biased stretch (basic and acidic residues) spans 132 to 157 (QLHDKRESVKQRDWQRDKARLMRDKG).

The protein belongs to the SmpB family.

Its subcellular location is the cytoplasm. Functionally, required for rescue of stalled ribosomes mediated by trans-translation. Binds to transfer-messenger RNA (tmRNA), required for stable association of tmRNA with ribosomes. tmRNA and SmpB together mimic tRNA shape, replacing the anticodon stem-loop with SmpB. tmRNA is encoded by the ssrA gene; the 2 termini fold to resemble tRNA(Ala) and it encodes a 'tag peptide', a short internal open reading frame. During trans-translation Ala-aminoacylated tmRNA acts like a tRNA, entering the A-site of stalled ribosomes, displacing the stalled mRNA. The ribosome then switches to translate the ORF on the tmRNA; the nascent peptide is terminated with the 'tag peptide' encoded by the tmRNA and targeted for degradation. The ribosome is freed to recommence translation, which seems to be the essential function of trans-translation. In Methylorubrum populi (strain ATCC BAA-705 / NCIMB 13946 / BJ001) (Methylobacterium populi), this protein is SsrA-binding protein.